We begin with the raw amino-acid sequence, 585 residues long: Arginine--tRNA ligase (585 aa).

The 'HIGH' region signature appears at 131–141; the sequence is ANPTGPMHVGH.

Belongs to the class-I aminoacyl-tRNA synthetase family. As to quaternary structure, monomer.

It localises to the cytoplasm. The enzyme catalyses tRNA(Arg) + L-arginine + ATP = L-arginyl-tRNA(Arg) + AMP + diphosphate. This is Arginine--tRNA ligase from Brucella suis (strain ATCC 23445 / NCTC 10510).